A 300-amino-acid polypeptide reads, in one-letter code: Delta-9 desaturase-like 4 protein (300 aa).

2 consecutive transmembrane segments (helical) span residues V39 to L59 and F61 to L81. A Histidine box-1 motif is present at residues H78–H83. The Histidine box-2 signature appears at H115 to H119. Helical transmembrane passes span I175–L195 and G200–W220. The Histidine box-3 signature appears at H247 to H251.

This sequence belongs to the fatty acid desaturase type 1 family. The cofactor is Fe cation.

It is found in the endoplasmic reticulum membrane. It functions in the pathway lipid metabolism; polyunsaturated fatty acid biosynthesis. The polypeptide is Delta-9 desaturase-like 4 protein (Arabidopsis thaliana (Mouse-ear cress)).